Consider the following 254-residue polypeptide: Trypsin 3A1 (254 aa).

The N-terminal stretch at 1 to 20 (MNQFLFVSFCALLGLSQVSA) is a signal peptide. Residues 21–27 (ATLSSGR) constitute a propeptide, activation peptide. Residues 28–253 (IVGGFQIDIA…VRQWIREVSE (226 aa)) form the Peptidase S1 domain. Residues cysteine 53 and cysteine 69 are joined by a disulfide bond. Catalysis depends on charge relay system residues histidine 68 and aspartate 113. Disulfide bonds link cysteine 178–cysteine 194 and cysteine 205–cysteine 229. Catalysis depends on serine 209, which acts as the Charge relay system.

The protein belongs to the peptidase S1 family. In terms of tissue distribution, midgut.

The protein resides in the secreted. It localises to the extracellular space. It carries out the reaction Preferential cleavage: Arg-|-Xaa, Lys-|-Xaa.. Functionally, major function may be to aid in digestion of the blood meal. This Aedes aegypti (Yellowfever mosquito) protein is Trypsin 3A1.